The sequence spans 134 residues: Transcription antitermination protein NusB (134 aa).

It belongs to the NusB family.

Functionally, involved in transcription antitermination. Required for transcription of ribosomal RNA (rRNA) genes. Binds specifically to the boxA antiterminator sequence of the ribosomal RNA (rrn) operons. In Halalkalibacterium halodurans (strain ATCC BAA-125 / DSM 18197 / FERM 7344 / JCM 9153 / C-125) (Bacillus halodurans), this protein is Transcription antitermination protein NusB.